The sequence spans 444 residues: tRNA modification GTPase MnmE (444 aa).

(6S)-5-formyl-5,6,7,8-tetrahydrofolate is bound by residues arginine 25, glutamate 83, and lysine 122. The 153-residue stretch at 218–370 (GFKVAIVGKP…IVGRLRDYLD (153 aa)) folds into the TrmE-type G domain. GTP-binding positions include 228 to 233 (NVGKSS), 247 to 253 (SDEAGTT), and 272 to 275 (DTAG). Positions 232 and 253 each coordinate Mg(2+). Lysine 444 contributes to the (6S)-5-formyl-5,6,7,8-tetrahydrofolate binding site.

It belongs to the TRAFAC class TrmE-Era-EngA-EngB-Septin-like GTPase superfamily. TrmE GTPase family. In terms of assembly, homodimer. Heterotetramer of two MnmE and two MnmG subunits. K(+) is required as a cofactor.

It is found in the cytoplasm. Functionally, exhibits a very high intrinsic GTPase hydrolysis rate. Involved in the addition of a carboxymethylaminomethyl (cmnm) group at the wobble position (U34) of certain tRNAs, forming tRNA-cmnm(5)s(2)U34. The sequence is that of tRNA modification GTPase MnmE from Campylobacter curvus (strain 525.92).